The primary structure comprises 262 residues: Glutamate racemase (262 aa).

Residues D9–S10 and Y41–G42 each bind substrate. Residue C73 is the Proton donor/acceptor of the active site. Residue N74 to T75 coordinates substrate. Catalysis depends on C180, which acts as the Proton donor/acceptor. A substrate-binding site is contributed by T181–H182.

The protein belongs to the aspartate/glutamate racemases family.

It catalyses the reaction L-glutamate = D-glutamate. It functions in the pathway cell wall biogenesis; peptidoglycan biosynthesis. Its function is as follows. Provides the (R)-glutamate required for cell wall biosynthesis. This is Glutamate racemase from Aliivibrio fischeri (strain ATCC 700601 / ES114) (Vibrio fischeri).